The primary structure comprises 449 residues: Glutamate--tRNA ligase 2 (449 aa).

The 'HIGH' region motif lies at 11–21; it reads PSPTGFLHIGN. The 'KMSKS' region signature appears at 242 to 246; that stretch reads GLSKR. Residue Lys245 coordinates ATP.

This sequence belongs to the class-I aminoacyl-tRNA synthetase family. Glutamate--tRNA ligase type 1 subfamily. Monomer.

It localises to the cytoplasm. It catalyses the reaction tRNA(Glu) + L-glutamate + ATP = L-glutamyl-tRNA(Glu) + AMP + diphosphate. Functionally, catalyzes the attachment of glutamate to tRNA(Glu) in a two-step reaction: glutamate is first activated by ATP to form Glu-AMP and then transferred to the acceptor end of tRNA(Glu). This chain is Glutamate--tRNA ligase 2, found in Methylorubrum populi (strain ATCC BAA-705 / NCIMB 13946 / BJ001) (Methylobacterium populi).